The chain runs to 172 residues: Myosin regulatory light chain 12B (172 aa).

Basic residues predominate over residues Met-1 to Gln-16. The interval Met-1–Ser-20 is disordered. At Thr-19 the chain carries Phosphothreonine; by MLCK and ZIPK/DAPK3. Phosphoserine; by MLCK and ZIPK/DAPK3 is present on Ser-20. 3 consecutive EF-hand domains span residues Ser-29–Asn-64, Asp-98–Arg-133, and Phe-134–Asp-169. Ca(2+) contacts are provided by Asp-42, Asn-44, Asp-46, and Asp-53.

As to quaternary structure, myosin is a hexamer of 2 heavy chains and 4 light chains: interacts with myosin heavy chain MYO19. Phosphorylation increases the actin-activated myosin ATPase activity and thereby regulates the contractile activity. It is required to generate the driving force in the migration of the cells but not necessary for localization of myosin-2 at the leading edge. Phosphorylation is reduced following epigallocatechin-3-O-gallate treatment.

Myosin regulatory subunit that plays an important role in regulation of both smooth muscle and nonmuscle cell contractile activity via its phosphorylation. Phosphorylation triggers actin polymerization in vascular smooth muscle. Implicated in cytokinesis, receptor capping, and cell locomotion. The polypeptide is Myosin regulatory light chain 12B (Myl12b) (Rattus norvegicus (Rat)).